A 187-amino-acid chain; its full sequence is Putative manganese efflux pump MntP (187 aa).

Transmembrane regions (helical) follow at residues 3-23 (LSAT…ASIG), 41-61 (LIFG…GLLA), 62-82 (TQFV…FLGG), 106-128 (LLVT…LAFL), 142-162 (ATLI…PLLG), and 167-187 (ILGG…HFAG).

Belongs to the MntP (TC 9.B.29) family.

It localises to the cell inner membrane. Probably functions as a manganese efflux pump. The sequence is that of Putative manganese efflux pump MntP from Cronobacter sakazakii (strain ATCC BAA-894) (Enterobacter sakazakii).